The primary structure comprises 425 residues: Histidine--tRNA ligase 2 (425 aa).

The protein belongs to the class-II aminoacyl-tRNA synthetase family. In terms of assembly, homodimer.

Its subcellular location is the cytoplasm. It catalyses the reaction tRNA(His) + L-histidine + ATP = L-histidyl-tRNA(His) + AMP + diphosphate + H(+). The chain is Histidine--tRNA ligase 2 from Shouchella clausii (strain KSM-K16) (Alkalihalobacillus clausii).